A 988-amino-acid chain; its full sequence is Ubiquitin carboxyl-terminal hydrolase 36 (988 aa).

The tract at residues 16 to 55 (PTLRTDNNGARKQAEHPNNQSHHNHPHPTSNPNELPKPKR) is disordered. Over residues 31-48 (HPNNQSHHNHPHPTSNPN) the composition is skewed to low complexity. The 309-residue stretch at 78–386 (TGMINVGNTC…NAYIMFFELD (309 aa)) folds into the USP domain. Cys-87 functions as the Nucleophile in the catalytic mechanism. The Proton acceptor role is filled by His-345. Disordered regions lie at residues 393 to 422 (PPAN…SPSP), 483 to 782 (ATSA…VTSN), and 868 to 988 (EQRQ…QQQT). 2 stretches are compositionally biased toward low complexity: residues 408-422 (STTP…SPSP) and 490-509 (NGNK…KSIN). Phosphoserine is present on residues Ser-419 and Ser-421. The segment covering 532–544 (TTAQLPSMPNMTE) has biased composition (polar residues). Phosphothreonine occurs at positions 561 and 565. A phosphoserine mark is found at Ser-575 and Ser-577. Residues 592 to 601 (EGEDFSESDQ) are compositionally biased toward acidic residues. Over residues 602 to 631 (ESGQTNGHSKTNGSLTNGSASSSVHVNNSK) the composition is skewed to polar residues. The segment covering 632–649 (QKTDAIDEIFKSLKKSAD) has biased composition (basic and acidic residues). The residue at position 650 (Ser-650) is a Phosphoserine. A compositionally biased stretch (acidic residues) spans 650 to 659 (SEEDDDEEEP). The span at 669-679 (PQKQSQSQSKA) shows a compositional bias: low complexity. The segment covering 680–689 (PPSPKTPPSP) has biased composition (pro residues). The residue at position 682 (Ser-682) is a Phosphoserine. Thr-685 bears the Phosphothreonine mark. The residue at position 688 (Ser-688) is a Phosphoserine. A compositionally biased stretch (acidic residues) spans 707–717 (VDAIDDDDDAV). Thr-728 is modified (phosphothreonine). Residues 735 to 747 (NPFSSSKPSTDSP) show a composition bias toward polar residues. Ser-746 bears the Phosphoserine mark. Phosphothreonine is present on Thr-749. Positions 762-782 (ALKSHQQPRVGNGYQSNVTSN) are enriched in polar residues. Composition is skewed to low complexity over residues 892–903 (SGSAKGNNASNS) and 930–943 (RFHN…FQQR).

It belongs to the peptidase C19 family. As to quaternary structure, interacts with atms/PAF1, but not with CycT.

It is found in the nucleus. Its subcellular location is the nucleolus. The enzyme catalyses Thiol-dependent hydrolysis of ester, thioester, amide, peptide and isopeptide bonds formed by the C-terminal Gly of ubiquitin (a 76-residue protein attached to proteins as an intracellular targeting signal).. Its function is as follows. Required for maintaining multiple types of adult stem cells, including male and female germline, epithelial follicle cell and intestinal stem cells. May function as a transcriptional repressor by continually deubiquiting histone H2B at the promoters of genes critical for cellular differentiation, thereby preventing histone H3 'Lys-4' trimethylation (H3K4). Controls selective autophagy activation by ubiquitinated proteins. This chain is Ubiquitin carboxyl-terminal hydrolase 36 (Usp36), found in Drosophila simulans (Fruit fly).